We begin with the raw amino-acid sequence, 485 residues long: Noelin (485 aa).

An N-terminal signal peptide occupies residues 1–24 (MSVPLLKIGVVLSTMAMITNWMSQ). N-linked (GlcNAc...) asparagine glycans are attached at residues Asn33, Asn103, Asn187, Asn288, Asn307, Asn394, Asn431, and Asn473. Positions 87–225 (RDARTKQLRQ…ERLRACMQKL (139 aa)) form a coiled coil. In terms of domain architecture, Olfactomedin-like spans 226–478 (ACGKLTGISD…QTLYNVTLFH (253 aa)). Cys227 and Cys409 form a disulfide bridge.

As to quaternary structure, homotetramer; disulfide-linked. Dimer of dimers, giving rise to a V-shaped homotretramer. Isoform 1 and isoform 3 interact with RTN4R. Identified in a complex with RTN4R and LINGO1. Peripherally associated with AMPAR complex. AMPAR complex consists of an inner core made of 4 pore-forming GluA/GRIA proteins (GRIA1, GRIA2, GRIA3 and GRIA4) and 4 major auxiliary subunits arranged in a twofold symmetry. One of the two pairs of distinct binding sites is occupied either by CNIH2, CNIH3 or CACNG2, CACNG3. The other harbors CACNG2, CACNG3, CACNG4, CACNG8 or GSG1L. This inner core of AMPAR complex is complemented by outer core constituents binding directly to the GluA/GRIA proteins at sites distinct from the interaction sites of the inner core constituents. Outer core constituents include at least PRRT1, PRRT2, CKAMP44/SHISA9, FRRS1L and NRN1. The proteins of the inner and outer core serve as a platform for other, more peripherally associated AMPAR constituents, including OLFM1. Alone or in combination, these auxiliary subunits control the gating and pharmacology of the AMPAR complex and profoundly impact their biogenesis and protein processing. Interacts with OLFM2. In terms of processing, in isoform 3 and isoform 4, the signal peptide is predicted to end in position 17. In terms of tissue distribution, expressed in the brain (at protein level). Expressed in the brain, predominantly in the cortex and hippocampus. In the pituitary only the two A-type and in the adrenal glands only the two B-type forms were detected.

It localises to the secreted. The protein resides in the synapse. The protein localises to the endoplasmic reticulum. It is found in the cell projection. Its subcellular location is the axon. It localises to the perikaryon. Its function is as follows. Contributes to the regulation of axonal growth in the embryonic and adult central nervous system by inhibiting interactions between RTN4R and LINGO1. Inhibits RTN4R-mediated axon growth cone collapse. May play an important role in regulating the production of neural crest cells by the neural tube. May be required for normal responses to olfactory stimuli. The chain is Noelin (Olfm1) from Rattus norvegicus (Rat).